The chain runs to 179 residues: Transcription initiation factor TFIID subunit 10 (179 aa).

A disordered region spans residues 1 to 23 (MNDPEQYEPSSSTESVLMPPPAL).

The protein belongs to the TAF10 family. As to quaternary structure, component of the TFIID basal transcription factor complex, composed of TATA-box-binding protein tbp-1, and a number of TBP-associated factors (TAFs).

It localises to the nucleus. Functionally, the TFIID basal transcription factor complex plays a major role in the initiation of RNA polymerase II (Pol II)-dependent transcription. TFIID recognizes and binds promoters via its subunit tbp-1, a TATA-box-binding protein, and promotes assembly of the pre-initiation complex (PIC). The TFIID complex consists of tbp-1 and TBP-associated factors (TAFs), including taf-10. Essential for early embryonic development, but not required for transcription of some genes; probably acts via activating transcription initiation by RNA Pol II, as part of the TFIID complex. The polypeptide is Transcription initiation factor TFIID subunit 10 (Caenorhabditis elegans).